We begin with the raw amino-acid sequence, 411 residues long: Acetylornithine aminotransferase (411 aa).

Residues 107–108 (GT) and phenylalanine 141 each bind pyridoxal 5'-phosphate. Arginine 144 contributes to the N(2)-acetyl-L-ornithine binding site. 227 to 230 (DEIQ) is a binding site for pyridoxal 5'-phosphate. The residue at position 256 (lysine 256) is an N6-(pyridoxal phosphate)lysine. A N(2)-acetyl-L-ornithine-binding site is contributed by threonine 284. Threonine 285 lines the pyridoxal 5'-phosphate pocket.

This sequence belongs to the class-III pyridoxal-phosphate-dependent aminotransferase family. ArgD subfamily. Homodimer. Requires pyridoxal 5'-phosphate as cofactor.

The protein resides in the cytoplasm. It carries out the reaction N(2)-acetyl-L-ornithine + 2-oxoglutarate = N-acetyl-L-glutamate 5-semialdehyde + L-glutamate. The protein operates within amino-acid biosynthesis; L-arginine biosynthesis; N(2)-acetyl-L-ornithine from L-glutamate: step 4/4. The protein is Acetylornithine aminotransferase of Xylella fastidiosa (strain 9a5c).